We begin with the raw amino-acid sequence, 1183 residues long: MERNKFASKMSQHYTKTICIAVVLVAVLFSLSSAAAAGSGAAVSVQLEALLEFKNGVADDPLGVLAGWRVGKSGDGAVRGGALPRHCNWTGVACDGAGQVTSIQLPESKLRGALSPFLGNISTLQVIDLTSNAFAGGIPPQLGRLGELEQLVVSSNYFAGGIPSSLCNCSAMWALALNVNNLTGAIPSCIGDLSNLEIFEAYLNNLDGELPPSMAKLKGIMVVDLSCNQLSGSIPPEIGDLSNLQILQLYENRFSGHIPRELGRCKNLTLLNIFSNGFTGEIPGELGELTNLEVMRLYKNALTSEIPRSLRRCVSLLNLDLSMNQLAGPIPPELGELPSLQRLSLHANRLAGTVPASLTNLVNLTILELSENHLSGPLPASIGSLRNLRRLIVQNNSLSGQIPASISNCTQLANASMSFNLFSGPLPAGLGRLQSLMFLSLGQNSLAGDIPDDLFDCGQLQKLDLSENSFTGGLSRLVGQLGNLTVLQLQGNALSGEIPEEIGNMTKLISLKLGRNRFAGHVPASISNMSSLQLLDLGHNRLDGVFPAEVFELRQLTILGAGSNRFAGPIPDAVANLRSLSFLDLSSNMLNGTVPAALGRLDQLLTLDLSHNRLAGAIPGAVIASMSNVQMYLNLSNNAFTGAIPAEIGGLVMVQTIDLSNNQLSGGVPATLAGCKNLYSLDLSGNSLTGELPANLFPQLDLLTTLNISGNDLDGEIPADIAALKHIQTLDVSRNAFAGAIPPALANLTALRSLNLSSNTFEGPVPDGGVFRNLTMSSLQGNAGLCGGKLLAPCHGHAAGKKRVFSRTGLVILVVLIALSTLLLLMVATILLVSYRRYRRKRRAADIAGDSPEAAVVVPELRRFSYGQLAAATNSFDQGNVIGSSNLSTVYKGVLAGDADGGMVVAVKRLNLEQFPSKSDKCFLTELATLSRLRHKNLARVVGYAWEAGKIKALVLDYMVNGDLDGAIHGGAAAPPPAPSRWTVRERLRVCVSVAHGLVYLHSGYDFPVVHCDVKPSNVLLDGDWEARVSDFGTARMLGVHLPAAANAAAQSTATSSAFRGTVGYMAPEFAYMRTVSTKVDVFSFGVLAMELFTGRRPTGTIEEDGVPLTLQQLVDNAVSRGLDGVHAVLDPRMKVATEADLSTAADVLAVALSCAAFEPADRPDMGAVLSSLLKMSKLVGED.

A signal peptide spans 1-41 (MERNKFASKMSQHYTKTICIAVVLVAVLFSLSSAAAAGSGA). At 42–809 (AVSVQLEALL…GKKRVFSRTG (768 aa)) the chain is on the extracellular side. A disulfide bridge links Cys-87 with Cys-94. N-linked (GlcNAc...) asparagine glycans are attached at residues Asn-88 and Asn-120. LRR repeat units lie at residues 97–120 (AGQV…FLGN), 121–145 (ISTL…LGRL), 147–169 (ELEQ…LCNC), 171–193 (AMWA…IGDL), 194–217 (SNLE…MAKL), 218–241 (KGIM…IGDL), 242–265 (SNLQ…LGRC), 267–289 (NLTL…LGEL), 290–313 (TNLE…LRRC), 315–337 (SLLN…LGEL), 338–361 (PSLQ…LTNL), 363–385 (NLTI…IGSL), and 386–409 (RNLR…ISNC). Cys-167 and Cys-189 are joined by a disulfide. Residues Asn-168 and Asn-181 are each glycosylated (N-linked (GlcNAc...) asparagine). The N-linked (GlcNAc...) asparagine glycan is linked to Asn-267. N-linked (GlcNAc...) asparagine glycans are attached at residues Asn-363, Asn-395, Asn-408, and Asn-414. 14 LRR repeats span residues 433-457 (LQSL…LFDC), 459-480 (QLQK…LVGQ), 481-505 (LGNL…IGNM), 507-529 (KLIS…ISNM), 530-553 (SSLQ…VFEL), 555-577 (QLTI…VANL), 578-600 (RSLS…ALGR), 601-625 (LDQL…VIAS), 627-651 (SNVQ…IGGL), 652-675 (VMVQ…LAGC), 676-699 (KNLY…LFPQ), 701-724 (DLLT…IAAL), 725-748 (KHIQ…LANL), and 749-773 (TALR…VFRN). Residues Asn-483, Asn-504, and Asn-528 are each glycosylated (N-linked (GlcNAc...) asparagine). Asn-591 carries an N-linked (GlcNAc...) asparagine glycan. The N-linked (GlcNAc...) asparagine glycan is linked to Asn-634. N-linked (GlcNAc...) asparagine glycans are attached at residues Asn-707, Asn-747, Asn-755, and Asn-773. The chain crosses the membrane as a helical span at residues 810–830 (LVILVVLIALSTLLLLMVATI). At 831–1183 (LLVSYRRYRR…LKMSKLVGED (353 aa)) the chain is on the cytoplasmic side. Positions 876 to 1179 (FDQGNVIGSS…LSSLLKMSKL (304 aa)) constitute a Protein kinase domain. Residues 882 to 890 (IGSSNLSTV) and Lys-908 contribute to the ATP site. The active-site Proton acceptor is the Asp-1013.

It belongs to the protein kinase superfamily. Ser/Thr protein kinase family. In terms of assembly, interacts with SERK2.

It is found in the cell membrane. The catalysed reaction is L-seryl-[protein] + ATP = O-phospho-L-seryl-[protein] + ADP + H(+). It catalyses the reaction L-threonyl-[protein] + ATP = O-phospho-L-threonyl-[protein] + ADP + H(+). In terms of biological role, constitutes the pattern-recognition receptor (PPR) that determines the specific perception of flagellin (flg22), a potent elicitor of the defense response to pathogen-associated molecular patterns (PAMPs). Recognizes flg22 from Pseudomonas aeruginosa and Acidovorax avenae. flg22 is a peptide derived from the bacterial flagellin N-terminus sequence. Does not recognize flg22 from Xanthomonas oryzae pv. oryzae (Xoo) or Xanthomonas oryzae pv. oryzicola (Xoc). In Oryza sativa subsp. japonica (Rice), this protein is LRR receptor-like serine/threonine-protein kinase FLS2.